Here is a 656-residue protein sequence, read N- to C-terminus: MTILENIRGPRDLKALSEAELGELSDEIRDFLVHAVARTGGHLGPNLGVVELTVALHRVFESPDDRILWDTGHQSYVHKLLTGRQDFSKLRSKGGLSGYPSREESAHDVIENSHASTVLGWADGLAKARQVQGERSHVVAVIGDGALTGGMAWEALNNIAAARDRPLIIVVNDNERSYAPTIGGLANHLATLRTTDGYERALAWGKDVLQRTPVVGHTVYEALHGAKKGFKDAFAPQGLFEDLGLKYLGPIDGHDIGAVESALRRAKRFHGPVLVHCLTEKGRGYEPALRDEEDHFHTVGVMDPLTCEPLGPAGGPSWTSVFGEEIVRIGEERADVVAITAAMLHPVGLAPFAERFPDRVWDVGIAEQHAAVSAAGLATGGLHPVVAVYATFLNRAFDQLLMDVALHRCGVTFVLDRAGVTGVDGASHNGMWDMSVLQVVPGLRIAAPRDADQLRTQLREAVAVDDAPTLLRFPKESVGPAVPAVDRIGGLDVLHTADRSEVLLVAVGVMAPVCLGAAELLEARGIGCTVVDPRWVKPVDPALAPLAARHRLVAVVEDNSRAAGVGSAVALALGDAEVDVPVRRFGIPEQFLAHAKRAEVLADIGLTPVDVAGRIAASLALAEPAGDRAGGPAVEQPGDGRMSGDGRIVMPAQGEN.

Residues His73 and 113 to 115 (SHA) each bind thiamine diphosphate. Position 144 (Asp144) interacts with Mg(2+). Residues 145 to 146 (GA), Asn174, Tyr285, and Glu367 contribute to the thiamine diphosphate site. A Mg(2+)-binding site is contributed by Asn174. Residues 625-656 (AGDRAGGPAVEQPGDGRMSGDGRIVMPAQGEN) form a disordered region.

The protein belongs to the transketolase family. DXPS subfamily. In terms of assembly, homodimer. Mg(2+) serves as cofactor. The cofactor is thiamine diphosphate.

It carries out the reaction D-glyceraldehyde 3-phosphate + pyruvate + H(+) = 1-deoxy-D-xylulose 5-phosphate + CO2. It participates in metabolic intermediate biosynthesis; 1-deoxy-D-xylulose 5-phosphate biosynthesis; 1-deoxy-D-xylulose 5-phosphate from D-glyceraldehyde 3-phosphate and pyruvate: step 1/1. In terms of biological role, catalyzes the acyloin condensation reaction between C atoms 2 and 3 of pyruvate and glyceraldehyde 3-phosphate to yield 1-deoxy-D-xylulose-5-phosphate (DXP). This chain is 1-deoxy-D-xylulose-5-phosphate synthase 1, found in Streptomyces coelicolor (strain ATCC BAA-471 / A3(2) / M145).